The following is a 92-amino-acid chain: Non-specific lipid-transfer protein A (92 aa).

4 disulfide bridges follow: Cys-3/Cys-51, Cys-13/Cys-28, Cys-29/Cys-74, and Cys-49/Cys-88.

Belongs to the plant LTP family.

Plant non-specific lipid-transfer proteins transfer phospholipids as well as galactolipids across membranes. May play a role in wax or cutin deposition in the cell walls of expanding epidermal cells and certain secretory tissues. This Ricinus communis (Castor bean) protein is Non-specific lipid-transfer protein A.